Consider the following 168-residue polypeptide: uncharacterized protein (168 aa).

3 disordered regions span residues 1 to 35, 48 to 97, and 126 to 168; these read MGSS…KKLD, KVKK…DKGN, and ASIT…GLGM. Residues 29 to 95 adopt a coiled-coil conformation; sequence KEKKKLDEKE…KNSLSRSQDK (67 aa). A compositionally biased stretch (basic and acidic residues) spans 68–85; sequence LAEDPMVKNVAENDHDQM. A compositionally biased stretch (polar residues) spans 126–139; that stretch reads ASITESSPSAQSNK. Basic and acidic residues predominate over residues 140-150; it reads TNDKQREKELE. The span at 157–168 shows a compositional bias: basic residues; sequence VLHKGTKKGLGM.

This is an uncharacterized protein from Schizosaccharomyces pombe (strain 972 / ATCC 24843) (Fission yeast).